The primary structure comprises 240 residues: Uridylate kinase (240 aa).

14–17 (KLSG) serves as a coordination point for ATP. Glycine 56 provides a ligand contact to UMP. Residues glycine 57 and arginine 61 each contribute to the ATP site. UMP is bound by residues aspartate 76 and 137 to 144 (TGNPFFTT). ATP-binding residues include threonine 164, tyrosine 170, and aspartate 173.

The protein belongs to the UMP kinase family. Homohexamer.

It localises to the cytoplasm. The catalysed reaction is UMP + ATP = UDP + ADP. It functions in the pathway pyrimidine metabolism; CTP biosynthesis via de novo pathway; UDP from UMP (UMPK route): step 1/1. Inhibited by UTP. Catalyzes the reversible phosphorylation of UMP to UDP. In Paracidovorax citrulli (strain AAC00-1) (Acidovorax citrulli), this protein is Uridylate kinase.